The following is a 21-amino-acid chain: Cutinase 2 (21 aa).

It belongs to the cutinase family.

It localises to the secreted. It catalyses the reaction cutin + H2O = cutin monomers.. Its activity is regulated as follows. Inhibited by diisopropyl fluorophosphate (DFP). Its function is as follows. Catalyzes the hydrolysis of complex carboxylic polyesters found in the cell wall of plants. Degrades cutin, a macromolecule that forms the structure of the plant cuticle. Allows pathogenic fungi to penetrate through the cuticular barrier into the host plant during the initial stage of fungal infection. This is Cutinase 2 from Colletotrichum gloeosporioides (Anthracnose fungus).